Reading from the N-terminus, the 147-residue chain is Large ribosomal subunit protein uL13 (147 aa).

It belongs to the universal ribosomal protein uL13 family. As to quaternary structure, part of the 50S ribosomal subunit.

This protein is one of the early assembly proteins of the 50S ribosomal subunit, although it is not seen to bind rRNA by itself. It is important during the early stages of 50S assembly. The chain is Large ribosomal subunit protein uL13 from Corynebacterium glutamicum (strain R).